Here is a 241-residue protein sequence, read N- to C-terminus: uncharacterized protein (241 aa).

A run of 6 helical transmembrane segments spans residues 1-21 (MMMALQIFIKILPIMFFGILL), 43-63 (FPIIAVFFVSSTSGSFLLKNL), 75-95 (LPIYFLGMFVFGIHIILFYAI), 108-128 (IYVLIKFLVTCNYLIISVLML), 160-180 (VLTSFVPSVLIITYLIEHGLL), and 200-220 (ILVIVLTGLATISGAIGIASG).

This sequence to M.jannaschii MJ0871, MJ0880 and MJ1556.

It is found in the cell membrane. This is an uncharacterized protein from Methanocaldococcus jannaschii (strain ATCC 43067 / DSM 2661 / JAL-1 / JCM 10045 / NBRC 100440) (Methanococcus jannaschii).